The sequence spans 391 residues: NAD(P)H-quinone oxidoreductase subunit H, chloroplastic (391 aa).

This sequence belongs to the complex I 49 kDa subunit family. In terms of assembly, NDH is composed of at least 16 different subunits, 5 of which are encoded in the nucleus.

The protein localises to the plastid. The protein resides in the chloroplast thylakoid membrane. It carries out the reaction a plastoquinone + NADH + (n+1) H(+)(in) = a plastoquinol + NAD(+) + n H(+)(out). The enzyme catalyses a plastoquinone + NADPH + (n+1) H(+)(in) = a plastoquinol + NADP(+) + n H(+)(out). Functionally, NDH shuttles electrons from NAD(P)H:plastoquinone, via FMN and iron-sulfur (Fe-S) centers, to quinones in the photosynthetic chain and possibly in a chloroplast respiratory chain. The immediate electron acceptor for the enzyme in this species is believed to be plastoquinone. Couples the redox reaction to proton translocation, and thus conserves the redox energy in a proton gradient. The chain is NAD(P)H-quinone oxidoreductase subunit H, chloroplastic from Nephroselmis olivacea (Green alga).